The following is a 43-amino-acid chain: MEIATLVAIFISGLLVSFTGYALYTAFGQPSQQLRDPFEEHGD.

Residues 3–23 (IATLVAIFISGLLVSFTGYAL) traverse the membrane as a helical segment.

Belongs to the PsbN family.

It is found in the plastid. The protein localises to the chloroplast thylakoid membrane. May play a role in photosystem I and II biogenesis. In Euonymus alatus (Burning bush), this protein is Protein PsbN.